The primary structure comprises 264 residues: Thymidylate synthase (264 aa).

DUMP is bound at residue Arg-21. His-51 is a (6R)-5,10-methylene-5,6,7,8-tetrahydrofolate binding site. 126 to 127 (RR) contacts dUMP. The Nucleophile role is filled by Cys-146. Residues 166–169 (RSAD), Asn-177, and 207–209 (HIY) each bind dUMP. Residue Asp-169 participates in (6R)-5,10-methylene-5,6,7,8-tetrahydrofolate binding. Ala-263 is a binding site for (6R)-5,10-methylene-5,6,7,8-tetrahydrofolate.

The protein belongs to the thymidylate synthase family. Bacterial-type ThyA subfamily. As to quaternary structure, homodimer.

The protein resides in the cytoplasm. It carries out the reaction dUMP + (6R)-5,10-methylene-5,6,7,8-tetrahydrofolate = 7,8-dihydrofolate + dTMP. Its pathway is pyrimidine metabolism; dTTP biosynthesis. Catalyzes the reductive methylation of 2'-deoxyuridine-5'-monophosphate (dUMP) to 2'-deoxythymidine-5'-monophosphate (dTMP) while utilizing 5,10-methylenetetrahydrofolate (mTHF) as the methyl donor and reductant in the reaction, yielding dihydrofolate (DHF) as a by-product. This enzymatic reaction provides an intracellular de novo source of dTMP, an essential precursor for DNA biosynthesis. The polypeptide is Thymidylate synthase (Brucella ovis (strain ATCC 25840 / 63/290 / NCTC 10512)).